We begin with the raw amino-acid sequence, 192 residues long: MVRAGAVGTHLPTSSLDIFGDLRKMNKRQLYYQVLNFAMIVSSALMIWKGLIVLTGSESPIVVVLSGSMEPAFHRGDLLFLTNFREDPIRAGEIVVFKVEGRDIPIVHRVIKVHEKDNGDIKFLTKGDNNEVDDRGLYKEGQNWLEKKDVVGRARGFLPYVGMVTIIMNDYPKFKYALLAVMGAYVLLKRES.

Over M1–R28 the chain is Cytoplasmic. Residues Q29–W48 traverse the membrane as a helical; Signal-anchor for type II membrane protein segment. Residues K49–S192 are Lumenal-facing. Residues S68, H108, and D134 each act as charge relay system in the active site. The segment at A177–L188 is C-terminal short (CTS) helix.

This sequence belongs to the peptidase S26B family. Component of the signal peptidase complex paralog C (SPC-C) composed of a catalytic subunit SEC11C and three accessory subunits SPCS1, SPCS2 and SPCS3. Within the complex, interacts with SPCS2 and SPCS3. The complex induces a local thinning of the ER membrane which is used to measure the length of the signal peptide (SP) h-region of protein substrates. This ensures the selectivity of the complex towards h-regions shorter than 18-20 amino acids. In terms of processing, may undergo processing at the N-terminus.

The protein localises to the endoplasmic reticulum membrane. It carries out the reaction Cleavage of hydrophobic, N-terminal signal or leader sequences from secreted and periplasmic proteins.. Functionally, catalytic component of the signal peptidase complex (SPC) which catalyzes the cleavage of N-terminal signal sequences from nascent proteins as they are translocated into the lumen of the endoplasmic reticulum. Specifically cleaves N-terminal signal peptides that contain a hydrophobic alpha-helix (h-region) shorter than 18-20 amino acids. The protein is Signal peptidase complex catalytic subunit SEC11C (Sec11c) of Mus musculus (Mouse).